The following is a 957-amino-acid chain: Dystrophin-related protein 2 (957 aa).

Spectrin repeat units lie at residues aspartate 102–glutamate 179 and glutamate 231–aspartate 337. A WW domain is found at tryptophan 358–proline 383. A ZZ-type; degenerate zinc finger spans residues lysine 605–threonine 661. The Zn(2+) site is built by cysteine 610, cysteine 613, cysteine 634, and cysteine 637. Residue serine 748 is modified to Phosphoserine. Over residues proline 877–serine 894 the composition is skewed to low complexity. The segment at proline 877–serine 923 is disordered. A Phosphothreonine modification is found at threonine 910.

As to quaternary structure, interacts with PRX; this enhances phosphorylation. Identified in a dystroglycan complex that contains at least PRX, DRP2, UTRN, DMD and DAG1. Detected in trigeminal nerve Schwann cells. Detected in brain cortex and hippocampus. Detected in brain membrane fractions and highly enriched in the postsynaptic density (at protein level).

The protein localises to the postsynaptic density. Its subcellular location is the cell projection. It is found in the dendrite. The protein resides in the perikaryon. It localises to the cell membrane. Required for normal myelination and for normal organization of the cytoplasm and the formation of Cajal bands in myelinating Schwann cells. Required for normal PRX location at appositions between the abaxonal surface of the myelin sheath and the Schwann cell plasma membrane. Possibly involved in membrane-cytoskeleton interactions of the central nervous system. This chain is Dystrophin-related protein 2 (Drp2), found in Rattus norvegicus (Rat).